We begin with the raw amino-acid sequence, 384 residues long: Probable L-tyrosine/L-aspartate decarboxylase (384 aa).

Lys233 carries the post-translational modification N6-(pyridoxal phosphate)lysine.

It belongs to the group II decarboxylase family. MfnA subfamily. The cofactor is pyridoxal 5'-phosphate.

It catalyses the reaction L-tyrosine + H(+) = tyramine + CO2. The catalysed reaction is L-aspartate + H(+) = beta-alanine + CO2. It participates in cofactor biosynthesis; methanofuran biosynthesis. It functions in the pathway cofactor biosynthesis; coenzyme A biosynthesis. Functionally, catalyzes the decarboxylation of L-tyrosine to produce tyramine for methanofuran biosynthesis. Can also catalyze the decarboxylation of L-aspartate to produce beta-alanine for coenzyme A (CoA) biosynthesis. In Methanococcus maripaludis (strain DSM 14266 / JCM 13030 / NBRC 101832 / S2 / LL), this protein is Probable L-tyrosine/L-aspartate decarboxylase.